A 392-amino-acid chain; its full sequence is Protein trapped in endoderm-1 (392 aa).

The Extracellular segment spans residues 1–39 (MDQDMGMATGYFQDADMQMDEPAAATQSIYPHSATLFAA). A helical transmembrane segment spans residues 40–60 (ISACVFVTIGVLGNLITLLAL). Topologically, residues 61–73 (LKSPTIREHATTA) are cytoplasmic. A helical membrane pass occupies residues 74–94 (FVISLSISDLLFCSFSLPLTA). The Extracellular portion of the chain corresponds to 95-110 (VRFFQESWTFGTTLCK). The chain crosses the membrane as a helical span at residues 111 to 131 (IFPVIFYGNVAVSLLSMVGIT). Residues 132-156 (LNRYILIACHSRYSQIYKPKFITLQ) are Cytoplasmic-facing. The chain crosses the membrane as a helical span at residues 157 to 177 (LLFVWAVSFLLLLPPILGIWG). Residues 178–202 (EMGLDEATFSCTILKKEGRSIKKTL) are Extracellular-facing. A helical transmembrane segment spans residues 203–223 (FVIGFLLPCLVIIVSYSCIYI). The Cytoplasmic segment spans residues 224 to 268 (TVLHQKKKIRNHDNFQIAAAKGSSSSGGGSYMTTTCTRKAREDNR). The chain crosses the membrane as a helical span at residues 269–289 (LTVMMVTIFLCFLVCFLPLML). Over 290-302 (ANVVDDERNTSYP) the chain is Extracellular. A glycan (N-linked (GlcNAc...) asparagine) is linked at asparagine 298. Residues 303–323 (WLHIIASVMAWASSVINPIIY) form a helical membrane-spanning segment. Residues 324–392 (AASNRNYRVA…INQMCQTYSV (69 aa)) lie on the Cytoplasmic side of the membrane. Phosphoserine occurs at positions 359, 362, and 366. Threonine 372 is subject to Phosphothreonine.

This sequence belongs to the G-protein coupled receptor 1 family. In embryos, expression is seen at highest levels in the cuprophilic cells and at lower levels in the amnioserosa, developing CNS, cardiac mesoderm primordium and midline glia.

It localises to the cell membrane. Its function is as follows. Essential for the first active step of germ cell migration: transepithelial migration of germ cells through the posterior midgut (PMG) epithelium. The sequence is that of Protein trapped in endoderm-1 (Tre1) from Drosophila melanogaster (Fruit fly).